Here is a 150-residue protein sequence, read N- to C-terminus: D-galactose-binding lectin (150 aa).

Residues H16 and G19 each coordinate D-galactose. The N-linked (GlcNAc...) asparagine glycan is linked to N26. Residues 35 to 37, H64, and G67 each bind D-galactose; that span reads DIH. A glycan (N-linked (GlcNAc...) asparagine) is linked at N74. Residues 83–85, H108, and G111 each bind D-galactose; that span reads DRH. N118 is a glycosylation site (N-linked (GlcNAc...) asparagine). 127–129 lines the D-galactose pocket; that stretch reads DEH.

In terms of assembly, oligomerizes in solution. In terms of processing, the N-terminus is blocked. In terms of tissue distribution, expressed in mantle. Expressed 51 and 1.6 fold in mantle and gonads, respectively, relative to that in hemocytes. Expressed at a much lower level in other tissues tested including gill, muscle and hepatopancreas.

Hemagglutinating activity does not require Ca(2+) ions. Hemagglutinating activity is inhibited by porcine stomach mucin (PSM), bovine submaxillary mucin (BSM) and fetuin. Agglutination of V.proteolyticus bacteria is inhibited by D-galactose, but not by D-glucose. Fungal binding is inhibited by D-galactose, but not by pathogen-associated molecular patterns (PAMPs) including lipopolysaccharide (LPS), peptidoglycan and beta-glucan. Functionally, D-galactose-binding lectin. Binds both alpha and beta anomer of galactose (Gal). Binds strongly to branched beta-Gal-terminated glycans and weakly to unbranched glycans with alpha-Gal on the end of chains. Has strong affinity for both Gal and GalNAc. Binds glycoproteins containing mucin-type chains. Has hemagglutinating activity towards human group A erythrocytes. Has hemagglutinating activity towards rabbit erythrocytes. Agglutinates V.proteolyticus bacteria. Binds strongly to fungi including species from genera Aspergillus, Alternaria, Fusarium and Haematonectria, and to a lesser extent to fungi from genera Trichoderma. Decreases conidia germination and hyphal growth of fungi. At high concentration, stimulates secretion of cytokines TNF-alpha and IFN-gamma from human peripheral blood cells, and at low concentration reduces hyperexpression of cytokine IL-10 in these cells, indicative of immunomodulatory capability. However, has no effect on IL-4 production. Recognizes pathogen-associated molecular patterns (PAMPs) and binds to peptidoglycan from S.aureus, but has only little binding to beta-1,3-glucan from E.gracilis and lipopolysaccharide (LPS) from E.coli. May be involved in innate immunity acting as an antibacterial or antifungal agent recognizing carbohydrate ligands on the surface of pathogens. The sequence is that of D-galactose-binding lectin from Mytilus trossulus (Blue mussel).